Consider the following 928-residue polypeptide: Serine/threonine-protein kinase atg1 (928 aa).

The Protein kinase domain maps to 6-315 (YTRLDEIGRG…FPEFFENEVI (310 aa)). Residues 12-20 (IGRGSFATV) and K35 each bind ATP. The Proton acceptor role is filled by D149. 2 disordered regions span residues 318-470 (PIPG…EQER) and 544-571 (FSGR…PTSA). Positions 359–371 (TRREREVNREDVY) are enriched in basic and acidic residues. Residues 437–452 (TTTAIERQRSRNTYSE) are compositionally biased toward polar residues. 2 stretches are compositionally biased toward basic and acidic residues: residues 459–470 (QPADKLKEEQER) and 548–564 (SRAD…ERRY).

Belongs to the protein kinase superfamily. Ser/Thr protein kinase family. APG1/unc-51/ULK1 subfamily. Homodimer. Forms a ternary complex with ATG13 and ATG17.

The protein localises to the cytoplasm. The protein resides in the preautophagosomal structure membrane. The enzyme catalyses L-seryl-[protein] + ATP = O-phospho-L-seryl-[protein] + ADP + H(+). It catalyses the reaction L-threonyl-[protein] + ATP = O-phospho-L-threonyl-[protein] + ADP + H(+). In terms of biological role, serine/threonine protein kinase involved in the cytoplasm to vacuole transport (Cvt) and found to be essential in autophagy, where it is required for the formation of autophagosomes. Involved in the clearance of protein aggregates which cannot be efficiently cleared by the proteasome. Required for selective autophagic degradation of the nucleus (nucleophagy) as well as for mitophagy which contributes to regulate mitochondrial quantity and quality by eliminating the mitochondria to a basal level to fulfill cellular energy requirements and preventing excess ROS production. Also involved in endoplasmic reticulum-specific autophagic process, in selective removal of ER-associated degradation (ERAD) substrates. Plays a key role in ATG9 and ATG23 cycling through the pre-autophagosomal structure and is necessary to promote ATG18 binding to ATG9 through phosphorylation of ATG9. Catalyzes phosphorylation of ATG4, decreasing the interaction between ATG4 and ATG8 and impairing deconjugation of PE-conjugated forms of ATG8. The protein is Serine/threonine-protein kinase atg1 of Aspergillus clavatus (strain ATCC 1007 / CBS 513.65 / DSM 816 / NCTC 3887 / NRRL 1 / QM 1276 / 107).